The following is a 559-amino-acid chain: Membrane protein insertase YidC (559 aa).

The helical transmembrane segment at 7-24 threads the bilayer; that stretch reads ILWVIFSMSLVLLYDNWQ. 2 stretches are compositionally biased toward low complexity: residues 45 to 55 and 63 to 82; these read APAASGAAAQG and QPAT…QAAA. The segment at 45–82 is disordered; it reads APAASGAAAQGDVPKANVQPATGTSAAPAAGAAPQAAA. A run of 5 helical transmembrane segments spans residues 338–358, 364–384, 434–454, 472–492, and 507–527; these read LELV…FWLL, FLGN…LVFF, LGGC…YWVL, LSVP…MFVQ, and VMMI…AGLV.

It belongs to the OXA1/ALB3/YidC family. Type 1 subfamily. As to quaternary structure, interacts with the Sec translocase complex via SecD. Specifically interacts with transmembrane segments of nascent integral membrane proteins during membrane integration.

It localises to the cell inner membrane. Required for the insertion and/or proper folding and/or complex formation of integral membrane proteins into the membrane. Involved in integration of membrane proteins that insert both dependently and independently of the Sec translocase complex, as well as at least some lipoproteins. Aids folding of multispanning membrane proteins. In Cupriavidus taiwanensis (strain DSM 17343 / BCRC 17206 / CCUG 44338 / CIP 107171 / LMG 19424 / R1) (Ralstonia taiwanensis (strain LMG 19424)), this protein is Membrane protein insertase YidC.